The primary structure comprises 472 residues: Diaminopimelate decarboxylase (472 aa).

The tract at residues M1–V23 is disordered. K97 carries the post-translational modification N6-(pyridoxal phosphate)lysine. Pyridoxal 5'-phosphate-binding positions include G283 and E325–R328. Positions 328, 369, and 373 each coordinate substrate. The active-site Proton donor is the C400. Substrate contacts are provided by E401 and Y430. Y430 contacts pyridoxal 5'-phosphate.

It belongs to the Orn/Lys/Arg decarboxylase class-II family. LysA subfamily. As to quaternary structure, homodimer. The cofactor is pyridoxal 5'-phosphate.

The enzyme catalyses meso-2,6-diaminopimelate + H(+) = L-lysine + CO2. The protein operates within amino-acid biosynthesis; L-lysine biosynthesis via DAP pathway; L-lysine from DL-2,6-diaminopimelate: step 1/1. Functionally, specifically catalyzes the decarboxylation of meso-diaminopimelate (meso-DAP) to L-lysine. This chain is Diaminopimelate decarboxylase, found in Mycobacterium leprae (strain TN).